The primary structure comprises 123 residues: Small ribosomal subunit protein uS12 (123 aa).

At aspartate 89 the chain carries 3-methylthioaspartic acid.

This sequence belongs to the universal ribosomal protein uS12 family. Part of the 30S ribosomal subunit. Contacts proteins S8 and S17. May interact with IF1 in the 30S initiation complex.

Its function is as follows. With S4 and S5 plays an important role in translational accuracy. Interacts with and stabilizes bases of the 16S rRNA that are involved in tRNA selection in the A site and with the mRNA backbone. Located at the interface of the 30S and 50S subunits, it traverses the body of the 30S subunit contacting proteins on the other side and probably holding the rRNA structure together. The combined cluster of proteins S8, S12 and S17 appears to hold together the shoulder and platform of the 30S subunit. This Anaeromyxobacter dehalogenans (strain 2CP-1 / ATCC BAA-258) protein is Small ribosomal subunit protein uS12.